Consider the following 187-residue polypeptide: uncharacterized protein (187 aa).

A Nudix hydrolase domain is found at Asn26 to Gln157. The Nudix box signature appears at Gly64–Asn86. Mg(2+)-binding residues include Glu80 and Glu84.

This sequence belongs to the Nudix hydrolase family. PCD1 subfamily. The cofactor is Mn(2+). Mg(2+) serves as cofactor.

In terms of biological role, probably mediates the hydrolysis of some nucleoside diphosphate derivatives. This is an uncharacterized protein from Photorhabdus laumondii subsp. laumondii (strain DSM 15139 / CIP 105565 / TT01) (Photorhabdus luminescens subsp. laumondii).